The sequence spans 172 residues: Shikimate kinase (172 aa).

11 to 16 contacts ATP; sequence ASGKTE. Residue Thr-15 coordinates Mg(2+). Positions 33, 57, and 80 each coordinate substrate. Arg-120 lines the ATP pocket. Position 142 (Arg-142) interacts with substrate.

It belongs to the shikimate kinase family. As to quaternary structure, monomer. It depends on Mg(2+) as a cofactor.

Its subcellular location is the cytoplasm. The enzyme catalyses shikimate + ATP = 3-phosphoshikimate + ADP + H(+). It functions in the pathway metabolic intermediate biosynthesis; chorismate biosynthesis; chorismate from D-erythrose 4-phosphate and phosphoenolpyruvate: step 5/7. Its function is as follows. Catalyzes the specific phosphorylation of the 3-hydroxyl group of shikimic acid using ATP as a cosubstrate. The sequence is that of Shikimate kinase from Flavobacterium psychrophilum (strain ATCC 49511 / DSM 21280 / CIP 103535 / JIP02/86).